A 727-amino-acid chain; its full sequence is Fatty acid oxidation complex subunit alpha (727 aa).

The segment at asparagine 16 to proline 205 is enoyl-CoA hydratase. Positions alanine 321 to proline 727 are 3-hydroxyacyl-CoA dehydrogenase.

The protein in the N-terminal section; belongs to the enoyl-CoA hydratase/isomerase family. In the central section; belongs to the 3-hydroxyacyl-CoA dehydrogenase family. Heterotetramer of two alpha chains (FadJ) and two beta chains (FadI).

It localises to the cytoplasm. The catalysed reaction is a (3S)-3-hydroxyacyl-CoA = a (2E)-enoyl-CoA + H2O. It catalyses the reaction a 4-saturated-(3S)-3-hydroxyacyl-CoA = a (3E)-enoyl-CoA + H2O. It carries out the reaction a (3S)-3-hydroxyacyl-CoA + NAD(+) = a 3-oxoacyl-CoA + NADH + H(+). The enzyme catalyses (3S)-3-hydroxybutanoyl-CoA = (3R)-3-hydroxybutanoyl-CoA. It participates in lipid metabolism; fatty acid beta-oxidation. Its function is as follows. Catalyzes the formation of a hydroxyacyl-CoA by addition of water on enoyl-CoA. Also exhibits 3-hydroxyacyl-CoA epimerase and 3-hydroxyacyl-CoA dehydrogenase activities. The protein is Fatty acid oxidation complex subunit alpha of Photorhabdus laumondii subsp. laumondii (strain DSM 15139 / CIP 105565 / TT01) (Photorhabdus luminescens subsp. laumondii).